Here is a 106-residue protein sequence, read N- to C-terminus: Nucleoid-associated protein RPB_0667 (106 aa).

This sequence belongs to the YbaB/EbfC family. In terms of assembly, homodimer.

The protein resides in the cytoplasm. It localises to the nucleoid. Functionally, binds to DNA and alters its conformation. May be involved in regulation of gene expression, nucleoid organization and DNA protection. The sequence is that of Nucleoid-associated protein RPB_0667 from Rhodopseudomonas palustris (strain HaA2).